We begin with the raw amino-acid sequence, 686 residues long: X-linked interleukin-1 receptor accessory protein-like 2 (686 aa).

Positions 1–16 are cleaved as a signal peptide; it reads MKLPLLLALVVCSAVS. The Extracellular portion of the chain corresponds to 17-354; the sequence is TNLKMVSKRN…LLRKKDLIYK (338 aa). An Ig-like C2-type 1 domain is found at 32–132; it reads IDWSVDLKTY…YCMKVSMSLT (101 aa). The cysteines at positions 53 and 116 are disulfide-linked. N-linked (GlcNAc...) asparagine glycans are attached at residues asparagine 63, asparagine 120, asparagine 136, asparagine 211, and asparagine 328. 2 Ig-like C2-type domains span residues 141-232 and 239-347; these read CYNS…LKVT and PPKP…VLLR. Intrachain disulfides connect cysteine 162/cysteine 214 and cysteine 265/cysteine 331. A helical transmembrane segment spans residues 355 to 375; it reads IELAGGLGAIFLLLILLLVVY. Over 376-686 the chain is Cytoplasmic; it reads KCYNIELMLF…KELSFTSDIW (311 aa). Positions 400–556 constitute a TIR domain; the sequence is KEYDAYLSYT…KFWKHLVYEM (157 aa). Residue glutamate 488 is part of the active site.

The protein belongs to the interleukin-1 receptor family. As to expression, detected in fetal brain after day 12.5, in particular in parts of the diencephalon and in the basal plate of the spinal cord. In postnatal brain detected in cerebral cortex, olfactory bulb, in the CA1 region of the hippocampus and in Purkinje cells of the Xth cerebellar lobule.

The protein resides in the membrane. The enzyme catalyses NAD(+) + H2O = ADP-D-ribose + nicotinamide + H(+). The chain is X-linked interleukin-1 receptor accessory protein-like 2 (Il1rapl2) from Mus musculus (Mouse).